A 660-amino-acid chain; its full sequence is Methionine--tRNA ligase (660 aa).

The 'HIGH' region motif lies at 11-21 (PYANGPCHLGH). Residues Cys-143, Cys-146, Cys-155, and Cys-158 each coordinate Zn(2+). Positions 325 to 329 (KMSTS) match the 'KMSKS' region motif. Thr-328 is a binding site for ATP. A tRNA-binding domain is found at 563–660 (DFDKVVIKIG…DECEVGERIQ (98 aa)).

Belongs to the class-I aminoacyl-tRNA synthetase family. MetG type 1 subfamily. In terms of assembly, homodimer. The cofactor is Zn(2+).

It localises to the cytoplasm. It carries out the reaction tRNA(Met) + L-methionine + ATP = L-methionyl-tRNA(Met) + AMP + diphosphate. In terms of biological role, is required not only for elongation of protein synthesis but also for the initiation of all mRNA translation through initiator tRNA(fMet) aminoacylation. The sequence is that of Methionine--tRNA ligase from Methanobrevibacter smithii (strain ATCC 35061 / DSM 861 / OCM 144 / PS).